The following is a 292-amino-acid chain: Galactinol synthase 2 (292 aa).

The active site involves lysine 65. Mn(2+)-binding residues include aspartate 81, aspartate 83, and histidine 218.

It belongs to the glycosyltransferase 8 family. Galactosyltransferase subfamily. A divalent metal cation is required as a cofactor. In terms of tissue distribution, present in phloem-associated intermediary cells. Weakly expressed in leaves.

The protein resides in the cytoplasm. The enzyme catalyses myo-inositol + UDP-alpha-D-galactose = alpha-D-galactosyl-(1-&gt;3)-1D-myo-inositol + UDP + H(+). Functionally, may promote plant stress tolerance. Galactinol synthase mainly involved in the biosynthesis of transport raffinose family oligosaccharides (RFOs) that function as osmoprotectants. The sequence is that of Galactinol synthase 2 (GOLS2) from Ajuga reptans (Bugle).